Reading from the N-terminus, the 1059-residue chain is Translation initiation factor IF-2 (1059 aa).

2 stretches are compositionally biased toward polar residues: residues 55-75 (LPHS…NQDS) and 107-126 (KINN…NNQV). Disordered regions lie at residues 55–81 (LPHS…GYNE), 93–394 (PKPL…RLRL), and 418–468 (SLSL…QSAE). The span at 178-187 (DSNEKSKVEV) shows a compositional bias: basic and acidic residues. The segment covering 202 to 211 (LNRNLRNTGV) has biased composition (polar residues). A compositionally biased stretch (basic residues) spans 216 to 229 (QKNKKPKQEGKKRK). Composition is skewed to basic and acidic residues over residues 230 to 252 (DKEE…DTSI) and 259 to 273 (SKKE…RESV). Residues 274–284 (KTSASDTSSQL) show a composition bias toward polar residues. Composition is skewed to basic and acidic residues over residues 291 to 300 (KPTVKLKQEQ) and 359 to 368 (LTKDKKVSKW). A compositionally biased stretch (low complexity) spans 452–463 (SHESVQSESNEQ). Residues 556–733 (RRPPVVTIMG…EVEDLQANPE (178 aa)) enclose the tr-type G domain. Residues 565–572 (GHVDHGKT) form a G1 region. 565–572 (GHVDHGKT) is a binding site for GTP. Residues 590 to 594 (GITQH) form a G2 region. The interval 615–618 (DTPG) is G3. Residues 615-619 (DTPGH) and 669-672 (NKID) each bind GTP. Residues 669 to 672 (NKID) are G4. Positions 705–707 (SAI) are G5.

The protein belongs to the TRAFAC class translation factor GTPase superfamily. Classic translation factor GTPase family. IF-2 subfamily.

The protein resides in the cytoplasm. Functionally, one of the essential components for the initiation of protein synthesis. Protects formylmethionyl-tRNA from spontaneous hydrolysis and promotes its binding to the 30S ribosomal subunits. Also involved in the hydrolysis of GTP during the formation of the 70S ribosomal complex. The sequence is that of Translation initiation factor IF-2 from Trichodesmium erythraeum (strain IMS101).